The primary structure comprises 282 residues: Shikimate dehydrogenase (NADP(+)) (282 aa).

Residues 15 to 17 (SKS) and Thr-62 contribute to the shikimate site. Residue Lys-66 is the Proton acceptor of the active site. 2 residues coordinate shikimate: Asn-87 and Asp-103. NADP(+)-binding positions include 127–131 (GAGGA), 151–156 (NRTHTK), and Met-220. Shikimate is bound at residue Tyr-222. Gly-244 lines the NADP(+) pocket.

Belongs to the shikimate dehydrogenase family. In terms of assembly, homodimer.

It carries out the reaction shikimate + NADP(+) = 3-dehydroshikimate + NADPH + H(+). It participates in metabolic intermediate biosynthesis; chorismate biosynthesis; chorismate from D-erythrose 4-phosphate and phosphoenolpyruvate: step 4/7. Its function is as follows. Involved in the biosynthesis of the chorismate, which leads to the biosynthesis of aromatic amino acids. Catalyzes the reversible NADPH linked reduction of 3-dehydroshikimate (DHSA) to yield shikimate (SA). This chain is Shikimate dehydrogenase (NADP(+)), found in Shewanella putrefaciens (strain CN-32 / ATCC BAA-453).